Consider the following 164-residue polypeptide: Transcription antitermination protein NusB (164 aa).

This sequence belongs to the NusB family.

Involved in transcription antitermination. Required for transcription of ribosomal RNA (rRNA) genes. Binds specifically to the boxA antiterminator sequence of the ribosomal RNA (rrn) operons. In Chlorobium limicola (strain DSM 245 / NBRC 103803 / 6330), this protein is Transcription antitermination protein NusB.